We begin with the raw amino-acid sequence, 403 residues long: GTPase Obg (403 aa).

In terms of domain architecture, Obg spans Met1–Leu159. The OBG-type G domain occupies Ala160–Ile333. Residues Gly166–Ser173, Phe191–Val195, Asp213–Gly216, Asn283–Asp286, and Ser314–Ala316 each bind GTP. Positions 173 and 193 each coordinate Mg(2+). A disordered region spans residues Tyr364–Pro403. Residues Gln365–Ile397 show a composition bias toward acidic residues.

Belongs to the TRAFAC class OBG-HflX-like GTPase superfamily. OBG GTPase family. As to quaternary structure, monomer. It depends on Mg(2+) as a cofactor.

The protein localises to the cytoplasm. An essential GTPase which binds GTP, GDP and possibly (p)ppGpp with moderate affinity, with high nucleotide exchange rates and a fairly low GTP hydrolysis rate. Plays a role in control of the cell cycle, stress response, ribosome biogenesis and in those bacteria that undergo differentiation, in morphogenesis control. This is GTPase Obg from Haemophilus influenzae (strain PittGG).